Reading from the N-terminus, the 317-residue chain is Melanocyte-stimulating hormone receptor (317 aa).

At 1 to 37 the chain is on the extracellular side; sequence MAVQGFQRRLLGSLNSTPTAIPQLGLAANQTGARCLE. Residue asparagine 29 is glycosylated (N-linked (GlcNAc...) asparagine). Residues 38-63 traverse the membrane as a helical segment; the sequence is VSIPDGLFLSLGLVSLVENVLVVATI. The Cytoplasmic portion of the chain corresponds to 64 to 72; sequence AKNRNLHSP. Residues 73-93 traverse the membrane as a helical segment; sequence TYCFICCLALSDLLVSGGNVL. The Extracellular portion of the chain corresponds to 94 to 118; that stretch reads ETVVILLLEASALAARAAVVQPLDN. A helical membrane pass occupies residues 119–140; that stretch reads VIDVITCSSMVSSLCFLGAIAV. The Cytoplasmic segment spans residues 141-163; sequence DRYVSIFYALRYHSIVTLPRARQ. A helical membrane pass occupies residues 164 to 183; sequence AIAAIWVASVLFSTLFIAYY. Topologically, residues 184–191 are extracellular; the sequence is DHAAVLLC. A helical transmembrane segment spans residues 192 to 211; sequence LVVFFLAMLVXMAVLYVHML. The Cytoplasmic portion of the chain corresponds to 212 to 240; that stretch reads ARACQHAQGIARLHKRQRPLHQGFGLKGA. A helical membrane pass occupies residues 241–266; the sequence is VTLTILLGIFFLCWGPFFLHLTLIVL. Residues 267 to 279 are Extracellular-facing; the sequence is CPQHPTCSCIFKN. Residues 280–300 traverse the membrane as a helical segment; the sequence is FNLFLTLIICNAIIDPLIYAF. The Cytoplasmic segment spans residues 301-317; sequence RRQELRRTLKEGLTCSW. A lipid anchor (S-palmitoyl cysteine) is attached at cysteine 315.

The protein belongs to the G-protein coupled receptor 1 family. In terms of assembly, interacts with MGRN1, but does not undergo MGRN1-mediated ubiquitination; this interaction competes with GNAS-binding and thus inhibits agonist-induced cAMP production. Interacts with OPN3; the interaction results in a decrease in MC1R-mediated cAMP signaling and ultimately a decrease in melanin production in melanocytes.

The protein resides in the cell membrane. Functionally, receptor for MSH (alpha, beta and gamma) and ACTH. The activity of this receptor is mediated by G proteins which activate adenylate cyclase. Mediates melanogenesis, the production of eumelanin (black/brown) and phaeomelanin (red/yellow), via regulation of cAMP signaling in melanocytes. The chain is Melanocyte-stimulating hormone receptor (MC1R) from Hylobates muelleri (Mueller's Bornean gibbon).